A 312-amino-acid chain; its full sequence is Ribonuclease Z (312 aa).

H63, H65, D67, H68, H140, D211, and H269 together coordinate Zn(2+). The Proton acceptor role is filled by D67.

It belongs to the RNase Z family. In terms of assembly, homodimer. Zn(2+) serves as cofactor.

It catalyses the reaction Endonucleolytic cleavage of RNA, removing extra 3' nucleotides from tRNA precursor, generating 3' termini of tRNAs. A 3'-hydroxy group is left at the tRNA terminus and a 5'-phosphoryl group is left at the trailer molecule.. In terms of biological role, zinc phosphodiesterase, which displays some tRNA 3'-processing endonuclease activity. Probably involved in tRNA maturation, by removing a 3'-trailer from precursor tRNA. This is Ribonuclease Z from Anoxybacillus flavithermus (strain DSM 21510 / WK1).